Here is a 431-residue protein sequence, read N- to C-terminus: Glucose-1-phosphate adenylyltransferase (431 aa).

Residue K39 participates in beta-D-fructose 1,6-bisphosphate binding. R40, H46, and R52 together coordinate AMP. Y114 contacts alpha-D-glucose 1-phosphate. R130 contributes to the AMP binding site. Alpha-D-glucose 1-phosphate-binding positions include G179, 194-195 (EK), and S212. R386 serves as a coordination point for AMP. A beta-D-fructose 1,6-bisphosphate-binding site is contributed by 429-431 (QER).

The protein belongs to the bacterial/plant glucose-1-phosphate adenylyltransferase family. Homotetramer.

The enzyme catalyses alpha-D-glucose 1-phosphate + ATP + H(+) = ADP-alpha-D-glucose + diphosphate. The protein operates within glycan biosynthesis; glycogen biosynthesis. With respect to regulation, allosterically activated by fructose-1,6-bisphosphate (F16BP) and inhibited by AMP. In terms of biological role, involved in the biosynthesis of ADP-glucose, a building block required for the elongation reactions to produce glycogen. Catalyzes the reaction between ATP and alpha-D-glucose 1-phosphate (G1P) to produce pyrophosphate and ADP-Glc. The sequence is that of Glucose-1-phosphate adenylyltransferase from Klebsiella pneumoniae subsp. pneumoniae (strain ATCC 700721 / MGH 78578).